Here is a 953-residue protein sequence, read N- to C-terminus: Ubiquitin carboxyl-terminal hydrolase CYLD (953 aa).

The tract at residues 106-590 is interaction with TRIP; sequence CEERFSLFKN…FEIMIGKKKG (485 aa). CAP-Gly domains lie at 153–198 and 253–286; these read LAER…VFVA and DVLPGKESLGYFVGVDMDNPIGNWDGRFDGVQLC. 2 disordered regions span residues 313-349 and 384-410; these read PPKLAFMSRGVGDKGSFSHNKPKATGSTSDPGTRNRS and SLTEIPPDFGHASPPLQPPSMNSLSSE. Positions 337-346 are enriched in polar residues; sequence TGSTSDPGTR. Serine 384, serine 415, and serine 419 each carry phosphoserine. Positions 391 to 466 are interaction with TRAF2; the sequence is DFGHASPPLQ…LAVSSGNSHG (76 aa). An interaction with IKBKG/NEMO region spans residues 467–681; it reads LEVGSLAEVK…FTSEEKDPEE (215 aa). Residues 489–532 enclose the CAP-Gly 3 domain; the sequence is GQPPGLNEVLAGLELEDECAGCTDGTFRGTRYFTCALKKALFVK. The 359-residue stretch at 589–947 folds into the USP domain; the sequence is KGIQGHYNSC…DAYMCMYQSP (359 aa). Residue cysteine 598 is the Nucleophile of the active site. Residues 778-830 form a B-box region; the sequence is LEDTPRQCRICGGLAMYECRECYDDPDISAGKIKQFCKTCNAQVHLHPKRLNH. The Zn(2+) site is built by cysteine 785, cysteine 788, cysteine 796, cysteine 799, cysteine 814, cysteine 817, histidine 822, and histidine 830. The active-site Proton acceptor is histidine 868.

The protein belongs to the peptidase C19 family. As to quaternary structure, interacts (via CAP-Gly domain) with IKBKG/NEMO (via proline-rich C-terminal region). Interacts with TRAF2 and TRIP. Interacts with PLK1, DVL1, DVL3, MAVS, TBK1, IKKE and RIGI. Interacts (via CAP-Gly domain) with microtubules. Interacts with HDAC6 and BCL3. Interacts with MAP3K7. Identified in a complex with TRAF6 and SQSTM1. Interacts with OPTN and SQSTM1. Interacts with CEP350. Interacts with RNF31; the interaction is indirect and is mediated via SPATA2. Interacts with SPATA2 (via the PUB domain); the interaction is direct and recruits CYLD to the LUBAC complex, thereby regulating TNF-alpha-induced necroptosis. In terms of processing, phosphorylated on several serine residues by IKKA and/or IKKB in response to immune stimuli. Phosphorylation requires IKBKG. Phosphorylation abolishes TRAF2 deubiquitination, interferes with the activation of Jun kinases, and strongly reduces CD40-dependent gene activation by NF-kappa-B. Ubiquitinated. Polyubiquitinated in hepatocytes treated with palmitic acid. Ubiquitination is mediated by E3 ligase TRIM47 and leads to proteasomal degradation.

The protein resides in the cytoplasm. Its subcellular location is the perinuclear region. It is found in the cytoskeleton. It localises to the cell membrane. The protein localises to the microtubule organizing center. The protein resides in the centrosome. Its subcellular location is the spindle. It is found in the cilium basal body. The enzyme catalyses Thiol-dependent hydrolysis of ester, thioester, amide, peptide and isopeptide bonds formed by the C-terminal Gly of ubiquitin (a 76-residue protein attached to proteins as an intracellular targeting signal).. Functionally, deubiquitinase that specifically cleaves 'Lys-63'- and linear 'Met-1'-linked polyubiquitin chains and is involved in NF-kappa-B activation and TNF-alpha-induced necroptosis. Negatively regulates NF-kappa-B activation by deubiquitinating upstream signaling factors. Contributes to the regulation of cell survival, proliferation and differentiation via its effects on NF-kappa-B activation. Negative regulator of Wnt signaling. Inhibits HDAC6 and thereby promotes acetylation of alpha-tubulin and stabilization of microtubules. Plays a role in the regulation of microtubule dynamics, and thereby contributes to the regulation of cell proliferation, cell polarization, cell migration, and angiogenesis. Required for normal cell cycle progress and normal cytokinesis. Inhibits nuclear translocation of NF-kappa-B. Plays a role in the regulation of inflammation and the innate immune response, via its effects on NF-kappa-B activation. Dispensable for the maturation of intrathymic natural killer cells, but required for the continued survival of immature natural killer cells. Negatively regulates TNFRSF11A signaling and osteoclastogenesis. Involved in the regulation of ciliogenesis, allowing ciliary basal bodies to migrate and dock to the plasma membrane; this process does not depend on NF-kappa-B activation. Ability to remove linear ('Met-1'-linked) polyubiquitin chains regulates innate immunity and TNF-alpha-induced necroptosis: recruited to the LUBAC complex via interaction with SPATA2 and restricts linear polyubiquitin formation on target proteins. Regulates innate immunity by restricting linear polyubiquitin formation on RIPK2 in response to NOD2 stimulation. Involved in TNF-alpha-induced necroptosis by removing linear ('Met-1'-linked) polyubiquitin chains from RIPK1, thereby regulating the kinase activity of RIPK1. Negatively regulates intestinal inflammation by removing 'Lys-63' linked polyubiquitin chain of NLRP6, thereby reducing the interaction between NLRP6 and PYCARD/ASC and formation of the NLRP6 inflammasome. Does not catalyze deubiquitination of heterotypic 'Lys-63'-/'Lys-48'-linked branched ubiquitin chains. Removes 'Lys-63' linked polyubiquitin chain of MAP3K7, which inhibits phosphorylation and blocks downstream activation of the JNK-p38 kinase cascades. Also removes 'Lys-63'-linked polyubiquitin chains of MAP3K1 and MA3P3K3, which inhibit their interaction with MAP2K1 and MAP2K2. This is Ubiquitin carboxyl-terminal hydrolase CYLD (CYLD) from Bos taurus (Bovine).